Consider the following 115-residue polypeptide: Large ribosomal subunit protein bL20c (115 aa).

This sequence belongs to the bacterial ribosomal protein bL20 family.

It localises to the plastid. The protein localises to the chloroplast. In terms of biological role, binds directly to 23S ribosomal RNA and is necessary for the in vitro assembly process of the 50S ribosomal subunit. It is not involved in the protein synthesizing functions of that subunit. This Nymphaea alba (White water-lily) protein is Large ribosomal subunit protein bL20c.